Consider the following 343-residue polypeptide: Adenine deaminase (343 aa).

Positions 17, 19, and 197 each coordinate Zn(2+). Glu-200 functions as the Proton donor in the catalytic mechanism. Residue Asp-278 coordinates Zn(2+). Substrate is bound at residue Asp-279.

It belongs to the metallo-dependent hydrolases superfamily. Adenosine and AMP deaminases family. Adenine deaminase type 2 subfamily. It depends on Zn(2+) as a cofactor.

It carries out the reaction adenine + H2O + H(+) = hypoxanthine + NH4(+). Its function is as follows. Catalyzes the hydrolytic deamination of adenine to hypoxanthine. Plays an important role in the purine salvage pathway and in nitrogen catabolism. This is Adenine deaminase from Rhodopseudomonas palustris (strain BisB18).